A 507-amino-acid polypeptide reads, in one-letter code: Capsid vertex component 1 (507 aa).

The disordered stretch occupies residues 219-257; sequence AAAETSVSKHHPALENPSNIRGSAGGEGGGGRAGTGGTV. Over residues 241 to 257 the composition is skewed to gly residues; that stretch reads SAGGEGGGGRAGTGGTV.

Belongs to the herpesviridae CVC1 protein family. As to quaternary structure, interacts (via C-terminus) with capsid vertex component 2/CVC2.

The protein resides in the virion. Its subcellular location is the host nucleus. In terms of biological role, capsid vertex-specific component that plays a role during viral DNA encapsidation, assuring correct genome cleavage and presumably stabilizing capsids that contain full-length viral genomes. This chain is Capsid vertex component 1, found in Epstein-Barr virus (strain B95-8) (HHV-4).